A 107-amino-acid polypeptide reads, in one-letter code: Large ribosomal subunit protein bL21 (107 aa).

It belongs to the bacterial ribosomal protein bL21 family. In terms of assembly, part of the 50S ribosomal subunit. Contacts protein L20.

In terms of biological role, this protein binds to 23S rRNA in the presence of protein L20. This Buchnera aphidicola subsp. Schizaphis graminum (strain Sg) protein is Large ribosomal subunit protein bL21.